The primary structure comprises 201 residues: Recombination protein RecR (201 aa).

A C4-type zinc finger spans residues 59–74 (CEICGNMDTENICRIC). The region spanning 82–177 (SIIAIVETVA…KISRLASGIP (96 aa)) is the Toprim domain.

Belongs to the RecR family.

Functionally, may play a role in DNA repair. It seems to be involved in an RecBC-independent recombinational process of DNA repair. It may act with RecF and RecO. The sequence is that of Recombination protein RecR from Rickettsia peacockii (strain Rustic).